Here is a 440-residue protein sequence, read N- to C-terminus: Mitochondrial translation factor 2 (440 aa).

The transit peptide at 1–15 directs the protein to the mitochondrion; sequence MIRTSSILKNCNYRY.

It is found in the mitochondrion matrix. Functionally, required for the processing and/or for the stability of the CYTB and COX1 intron-containing pre-mRNAs and of the ATP6 transcript. Could be a stem-loop RNA-binding protein that plays a role in determining RNA stability. The sequence is that of Mitochondrial translation factor 2 (MTF2) from Saccharomyces cerevisiae (strain ATCC 204508 / S288c) (Baker's yeast).